Consider the following 386-residue polypeptide: Succinate--CoA ligase [ADP-forming] subunit beta (386 aa).

Positions 9–244 (KALLRAAGIK…TTQEDHRETQ (236 aa)) constitute an ATP-grasp domain. Residues K46, 53–55 (GRG), E100, and R103 contribute to the ATP site. Positions 199 and 213 each coordinate Mg(2+). Substrate contacts are provided by residues N264 and 321–323 (GIV).

This sequence belongs to the succinate/malate CoA ligase beta subunit family. In terms of assembly, heterotetramer of two alpha and two beta subunits. The cofactor is Mg(2+).

It carries out the reaction succinate + ATP + CoA = succinyl-CoA + ADP + phosphate. The enzyme catalyses GTP + succinate + CoA = succinyl-CoA + GDP + phosphate. It functions in the pathway carbohydrate metabolism; tricarboxylic acid cycle; succinate from succinyl-CoA (ligase route): step 1/1. Functionally, succinyl-CoA synthetase functions in the citric acid cycle (TCA), coupling the hydrolysis of succinyl-CoA to the synthesis of either ATP or GTP and thus represents the only step of substrate-level phosphorylation in the TCA. The beta subunit provides nucleotide specificity of the enzyme and binds the substrate succinate, while the binding sites for coenzyme A and phosphate are found in the alpha subunit. The chain is Succinate--CoA ligase [ADP-forming] subunit beta from Dichelobacter nodosus (strain VCS1703A).